The primary structure comprises 210 residues: Adenylate kinase isoenzyme 1 (210 aa).

Position 30–35 (30–35) interacts with ATP; the sequence is GSGKGT. Residues 50-79 are NMP; sequence SSGDLLRDEVKSGSPRGAQLTAIMESGALV. AMP-binding positions include S51, R56, 77-79, 107-110, and Q114; these read ALV and GYPR. The LID stretch occupies residues 144-154; the sequence is HRAQTSGRADD. An ATP-binding site is contributed by R145. The AMP site is built by R151 and R162. Residue G190 coordinates ATP.

This sequence belongs to the adenylate kinase family. AK1 subfamily. As to quaternary structure, monomer.

The protein localises to the cytoplasm. The enzyme catalyses AMP + ATP = 2 ADP. Functionally, catalyzes the reversible transfer of the terminal phosphate group between ATP and AMP. Plays an important role in cellular energy homeostasis and in adenine nucleotide metabolism. This Caenorhabditis elegans protein is Adenylate kinase isoenzyme 1.